Consider the following 616-residue polypeptide: Ectonucleoside triphosphate diphosphohydrolase 4 (616 aa).

At 1-33 the chain is on the cytoplasmic side; sequence MGRIGISCLFPASWHFSISPVGCPRILNTNLRQ. The chain crosses the membrane as a helical span at residues 34–54; the sequence is IMVISVLAAAVSLLYFSVVII. Residues 55–559 lie on the Lumenal side of the membrane; it reads RNKYGRLTRD…ASHTHWRGVS (505 aa). The active-site Proton acceptor is glutamate 222. Cysteine 368 and cysteine 395 form a disulfide bridge. N-linked (GlcNAc...) asparagine glycans are attached at residues asparagine 404 and asparagine 407. Cysteine 461 and cysteine 490 are disulfide-bonded. The helical transmembrane segment at 560–580 threads the bilayer; that stretch reads FVYNHYLFSGCFLVVLLAILL. Over 581-616 the chain is Cytoplasmic; it reads YLLRLRRIHRRTPRSSSAAALWMEEGLPAQNAPGTL.

The protein belongs to the GDA1/CD39 NTPase family. It depends on Ca(2+) as a cofactor. The cofactor is Mg(2+). Ubiquitous. Highest expression in testis and lowest in bladder.

The protein resides in the cytoplasmic vesicle. It localises to the autophagosome membrane. Its subcellular location is the lysosome membrane. It is found in the golgi apparatus membrane. The enzyme catalyses a ribonucleoside 5'-diphosphate + H2O = a ribonucleoside 5'-phosphate + phosphate + H(+). It catalyses the reaction a ribonucleoside 5'-triphosphate + H2O = a ribonucleoside 5'-diphosphate + phosphate + H(+). It carries out the reaction UDP + H2O = UMP + phosphate + H(+). The catalysed reaction is UTP + H2O = UDP + phosphate + H(+). The enzyme catalyses CTP + H2O = CDP + phosphate + H(+). It catalyses the reaction GDP + H2O = GMP + phosphate + H(+). It carries out the reaction GTP + H2O = GDP + phosphate + H(+). The catalysed reaction is 5-methyl-UTP + H2O = 5-methyl-UDP + phosphate + H(+). Functionally, catalyzes the hydrolysis of nucleoside triphosphates and diphosphates in a calcium- or magnesium-dependent manner, with a preference for pyrimidines. Preferentially hydrolyzes UTP and TTP. AMP, ADP, ATP and UMP are not substrates. Preferentially activated by Ca(2+) over Mg(2+). In terms of biological role, has a broad substrate specificity with the ability of cleaving all nucleotide di- and triphosphates with the exception of adenosine di- and triphosphate (ADP and ATP). Preferentially hydrolyzes CTP, UDP, CDP, GTP and GDP. Can use either Ca(2+) or Mg(2+) equally. The protein is Ectonucleoside triphosphate diphosphohydrolase 4 of Homo sapiens (Human).